Consider the following 61-residue polypeptide: Large ribosomal subunit protein uL29 (61 aa).

The protein belongs to the universal ribosomal protein uL29 family.

The polypeptide is Large ribosomal subunit protein uL29 (Xanthomonas campestris pv. campestris (strain 8004)).